Reading from the N-terminus, the 484-residue chain is Muscarinic acetylcholine receptor M4 (484 aa).

At 1-32 (MENDTWENESSASNHSIDETIVEIPGKYQTME) the chain is on the extracellular side. N-linked (GlcNAc...) asparagine glycosylation is found at Asn3, Asn8, and Asn14. The helical transmembrane segment at 33–55 (MIFIATVTGSLSLVTVVGNILVM) threads the bilayer. The Cytoplasmic portion of the chain corresponds to 56-69 (LSIKVNRQLQTVNN). The chain crosses the membrane as a helical span at residues 70-90 (YFLFSLACADLIIGVFSMNLY). Residues 91 to 107 (SLYIIKGYWPLGPIVCD) lie on the Extracellular side of the membrane. Cys106 and Cys186 are oxidised to a cystine. A helical membrane pass occupies residues 108–129 (LWLALDYVVSNASVMNLLIISL). Residues 130–149 (ERXFCVTKPLTYPARRTTKM) lie on the Cytoplasmic side of the membrane. Residues 150–172 (AGLMIAAAWLLSFELWAPAILFW) form a helical membrane-spanning segment. Over 173-194 (QFIVGQRTVPSGECYIQFLSNP) the chain is Extracellular. The chain crosses the membrane as a helical span at residues 195 to 217 (AVTFGTAIAAFYLPVVIMTILYI). The Cytoplasmic portion of the chain corresponds to 218-406 (HISLASRSRV…AAREKKVTRT (189 aa)). The disordered stretch occupies residues 255–316 (NIPKQDAGDK…EKQPLSEASS (62 aa)). Residues 260-270 (DAGDKVVEKKN) are compositionally biased toward basic and acidic residues. A helical transmembrane segment spans residues 407 to 427 (IFAILLAFIITWTPYNVMVLI). Topologically, residues 428–441 (NTFCQTCIPETIWY) are extracellular. A helical membrane pass occupies residues 442-461 (IGYWLCYVNSTINPACYALC). The Cytoplasmic portion of the chain corresponds to 462 to 484 (NATFKKTFKHLLMCQYKSIGTAR).

The protein belongs to the G-protein coupled receptor 1 family. Muscarinic acetylcholine receptor subfamily. CHRM4 sub-subfamily.

Its subcellular location is the cell membrane. It is found in the postsynaptic cell membrane. In terms of biological role, the muscarinic acetylcholine receptor mediates various cellular responses, including inhibition of adenylate cyclase, breakdown of phosphoinositides and modulation of potassium channels through the action of G proteins. Primary transducing effect is inhibition of adenylate cyclase. The chain is Muscarinic acetylcholine receptor M4 (chrm4) from Xenopus laevis (African clawed frog).